Reading from the N-terminus, the 96-residue chain is Uteroglobin (96 aa).

The signal sequence occupies residues Met-1–Ser-21.

This sequence belongs to the secretoglobin family. In terms of assembly, antiparallel homodimer; disulfide-linked. Interaction with LMBR1L is controversial. Club cells (nonciliated cells of the surface epithelium of the pulmonary airways).

It is found in the secreted. Binds phosphatidylcholine, phosphatidylinositol, polychlorinated biphenyls (PCB) and weakly progesterone, potent inhibitor of phospholipase A2. The protein is Uteroglobin (Scgb1a1) of Mus musculus (Mouse).